A 602-amino-acid chain; its full sequence is MFS-type efflux transporter pyiT (602 aa).

The tract at residues 1 to 33 (MEKAKDSLPTTGDPVPSQGTINPVDETGGSASD) is disordered. 7 helical membrane-spanning segments follow: residues 43 to 63 (FWFTFSSLVLTAFLSALEGSV), 123 to 143 (WLTIGAVVIFTVGSGICGGAT), 156 to 176 (GLGSAGINMLVELILCDLLPL), 185 to 205 (IIFMFVILGSVIGPFLGGILV), 212 to 232 (WVFYINIPFSGVCVVLLFFFL), 251 to 271 (FFGNFLLAASVGSCLFALTYG), and 282 to 302 (IIVSLVLGLLGHVAFMFFEAS). Asparagine 317 carries an N-linked (GlcNAc...) asparagine glycan. A run of 6 helical transmembrane segments spans residues 325-345 (IATFLQTLVSFWVLYFLPLYF), 357-377 (GVMLLPFSVVYALSSLAGGAL), 386-406 (NIHFASFALMTIGMGTLTILN), 410-430 (SLAVIVVLEMIVALAIGVPTA), 451-471 (TFAFLRSVGTIWGVSIPAAIF), and 524-544 (LERVWQIGIVFAGVGFLVIFL). The span at 564 to 585 (IPQTAADNSASRPNTINDTASQ) shows a compositional bias: polar residues. Residues 564 to 602 (IPQTAADNSASRPNTINDTASQAPILKQRRSTNQERETV) are disordered. N-linked (GlcNAc...) asparagine glycosylation occurs at asparagine 580.

It belongs to the major facilitator superfamily.

Its subcellular location is the cell membrane. In terms of biological role, MFS-type efflux transporter; part of the gene cluster that mediates the biosynthesis of the mycotoxin pyrichalasin H, a tyrosine-derived cytochalasan that inhibits the growth of rice seedlings, but also inhibits lymphocyte capping and actin polymerization and alters cell morphology. Pyrichalasin H is indicated as the responsible agent for the genus-specific pathogenicity of M.grisea toward crabgrass. PyiT might be involved in the excretion of pyrichalasin H. The sequence is that of MFS-type efflux transporter pyiT from Pyricularia grisea (Crabgrass-specific blast fungus).